A 381-amino-acid chain; its full sequence is Cytochrome b (381 aa).

4 helical membrane passes run 34–54 (FGSLLGLCLIIQILTGLFLAM), 78–99 (WLIRNIHANGASLFFICVYLHI), 114–134 (WNIGVILLFLLMATAFVGYVL), and 179–199 (FFAFHFLLPFLILALTVIHLL). The heme b site is built by His84 and His98. 2 residues coordinate heme b: His183 and His197. His202 lines the a ubiquinone pocket. The next 4 membrane-spanning stretches (helical) occupy residues 227–247 (YKDLLGFFVMIFFLTTLALFM), 289–309 (LGGVLALLFSIFILMLVPLLH), 321–341 (LTQIFFWLLVANSIILTWIGG), and 348–368 (FITVGQIASISYFSLFLIIMP).

It belongs to the cytochrome b family. In terms of assembly, the cytochrome bc1 complex contains 3 respiratory subunits (MT-CYB, CYC1 and UQCRFS1), 2 core proteins (UQCRC1 and UQCRC2) and probably 6 low-molecular weight proteins. Heme b is required as a cofactor.

It localises to the mitochondrion inner membrane. Its function is as follows. Component of the ubiquinol-cytochrome c reductase complex (complex III or cytochrome b-c1 complex) that is part of the mitochondrial respiratory chain. The b-c1 complex mediates electron transfer from ubiquinol to cytochrome c. Contributes to the generation of a proton gradient across the mitochondrial membrane that is then used for ATP synthesis. The protein is Cytochrome b (mt-cyb) of Sphyrna lewini (Scalloped hammerhead shark).